The primary structure comprises 156 residues: Ribosomal RNA large subunit methyltransferase H (156 aa).

S-adenosyl-L-methionine-binding positions include L73, G104, and 123–128 (VSSLTL).

This sequence belongs to the RNA methyltransferase RlmH family. Homodimer.

It localises to the cytoplasm. The enzyme catalyses pseudouridine(1915) in 23S rRNA + S-adenosyl-L-methionine = N(3)-methylpseudouridine(1915) in 23S rRNA + S-adenosyl-L-homocysteine + H(+). Functionally, specifically methylates the pseudouridine at position 1915 (m3Psi1915) in 23S rRNA. This is Ribosomal RNA large subunit methyltransferase H from Burkholderia mallei (strain NCTC 10247).